Reading from the N-terminus, the 274-residue chain is Penicillin-insensitive murein endopeptidase (274 aa).

Residues 1–19 (MNKTAIALLALLASSASLA) form the signal peptide. Intrachain disulfides connect Cys-44–Cys-265, Cys-187–Cys-235, and Cys-216–Cys-223. Residues His-110, His-113, Asp-120, Asp-147, His-150, and His-211 each coordinate Zn(2+). The segment at 227–274 (PLPPPGDGCGAELQSWFEPPKPGTTKPEKKTPPPLPPSCQALLDEHVI) is disordered.

Belongs to the peptidase M74 family. Dimer. It depends on Zn(2+) as a cofactor.

It is found in the periplasm. Its function is as follows. Murein endopeptidase that cleaves the D-alanyl-meso-2,6-diamino-pimelyl amide bond that connects peptidoglycan strands. Likely plays a role in the removal of murein from the sacculus. This chain is Penicillin-insensitive murein endopeptidase, found in Escherichia coli (strain ATCC 8739 / DSM 1576 / NBRC 3972 / NCIMB 8545 / WDCM 00012 / Crooks).